The following is a 130-amino-acid chain: Holo-[acyl-carrier-protein] synthase (130 aa).

The Mg(2+) site is built by aspartate 9 and glutamate 58.

This sequence belongs to the P-Pant transferase superfamily. AcpS family. Mg(2+) serves as cofactor.

It is found in the cytoplasm. It catalyses the reaction apo-[ACP] + CoA = holo-[ACP] + adenosine 3',5'-bisphosphate + H(+). In terms of biological role, transfers the 4'-phosphopantetheine moiety from coenzyme A to a Ser of acyl-carrier-protein. This is Holo-[acyl-carrier-protein] synthase from Mycobacterium bovis (strain ATCC BAA-935 / AF2122/97).